Reading from the N-terminus, the 107-residue chain is CLAVATA3/ESR (CLE)-related protein 13 (107 aa).

The signal sequence occupies residues 1–25 (MATTRVSHVLGFLLWISLLIFVSIG). A glycan (N-linked (GlcNAc...) asparagine) is linked at Asn-29. The disordered stretch occupies residues 79–107 (ALPAGGSEIDPRYGVEKRLVPSGPNPLHH). The segment covering 87 to 97 (IDPRYGVEKRL) has biased composition (basic and acidic residues). Pro-99 and Pro-102 each carry hydroxyproline. An O-linked (Ara...) hydroxyproline glycan is attached at Pro-102.

Belongs to the CLV3/ESR signal peptide family. Post-translationally, the O-glycosylation (arabinosylation) of the hydroxyproline Pro-102 enhances binding affinity of the CLE13p peptide for its receptor. As to expression, mostly expressed in seedlings, roots, flowers, stems and apex, and, to a lower extent, in leaves and siliques.

Its subcellular location is the secreted. It localises to the extracellular space. In terms of biological role, extracellular signal peptide that regulates cell fate. Represses root apical meristem maintenance. Regulates the transition of protophloem cells from proliferation to differentiation, thus impinging on postembryonic growth capacity of the root meristem; this signaling pathway requires CRN and CLV2. The chain is CLAVATA3/ESR (CLE)-related protein 13 from Arabidopsis thaliana (Mouse-ear cress).